The primary structure comprises 208 residues: A-type ATP synthase subunit E (208 aa).

Residues 37-57 (DAEKTAEAEKNKILDNGKKQS) form a disordered region.

The protein belongs to the V-ATPase E subunit family. As to quaternary structure, has multiple subunits with at least A(3), B(3), C, D, E, F, H, I and proteolipid K(x).

It is found in the cell membrane. Functionally, component of the A-type ATP synthase that produces ATP from ADP in the presence of a proton gradient across the membrane. The sequence is that of A-type ATP synthase subunit E from Methanobrevibacter smithii (strain ATCC 35061 / DSM 861 / OCM 144 / PS).